The primary structure comprises 397 residues: Tryptophan synthase beta chain (397 aa).

The residue at position 87 (K87) is an N6-(pyridoxal phosphate)lysine.

It belongs to the TrpB family. In terms of assembly, tetramer of two alpha and two beta chains. The cofactor is pyridoxal 5'-phosphate.

The catalysed reaction is (1S,2R)-1-C-(indol-3-yl)glycerol 3-phosphate + L-serine = D-glyceraldehyde 3-phosphate + L-tryptophan + H2O. It participates in amino-acid biosynthesis; L-tryptophan biosynthesis; L-tryptophan from chorismate: step 5/5. Its function is as follows. The beta subunit is responsible for the synthesis of L-tryptophan from indole and L-serine. The sequence is that of Tryptophan synthase beta chain from Shigella boydii serotype 18 (strain CDC 3083-94 / BS512).